Consider the following 273-residue polypeptide: Ethanolamine ammonia-lyase small subunit (273 aa).

Residues valine 164, glutamate 185, and cysteine 214 each coordinate adenosylcob(III)alamin.

This sequence belongs to the EutC family. The basic unit is a heterodimer which dimerizes to form tetramers. The heterotetramers trimerize; 6 large subunits form a core ring with 6 small subunits projecting outwards. It depends on adenosylcob(III)alamin as a cofactor.

The protein resides in the bacterial microcompartment. It carries out the reaction ethanolamine = acetaldehyde + NH4(+). Its pathway is amine and polyamine degradation; ethanolamine degradation. Catalyzes the deamination of various vicinal amino-alcohols to oxo compounds. Allows this organism to utilize ethanolamine as the sole source of nitrogen and carbon in the presence of external vitamin B12. This is Ethanolamine ammonia-lyase small subunit from Pseudomonas aeruginosa (strain UCBPP-PA14).